The chain runs to 252 residues: Imidazole glycerol phosphate synthase subunit HisF (252 aa).

Residues D11 and D130 contribute to the active site.

It belongs to the HisA/HisF family. As to quaternary structure, heterodimer of HisH and HisF.

Its subcellular location is the cytoplasm. It catalyses the reaction 5-[(5-phospho-1-deoxy-D-ribulos-1-ylimino)methylamino]-1-(5-phospho-beta-D-ribosyl)imidazole-4-carboxamide + L-glutamine = D-erythro-1-(imidazol-4-yl)glycerol 3-phosphate + 5-amino-1-(5-phospho-beta-D-ribosyl)imidazole-4-carboxamide + L-glutamate + H(+). It participates in amino-acid biosynthesis; L-histidine biosynthesis; L-histidine from 5-phospho-alpha-D-ribose 1-diphosphate: step 5/9. In terms of biological role, IGPS catalyzes the conversion of PRFAR and glutamine to IGP, AICAR and glutamate. The HisF subunit catalyzes the cyclization activity that produces IGP and AICAR from PRFAR using the ammonia provided by the HisH subunit. In Citrifermentans bemidjiense (strain ATCC BAA-1014 / DSM 16622 / JCM 12645 / Bem) (Geobacter bemidjiensis), this protein is Imidazole glycerol phosphate synthase subunit HisF.